A 521-amino-acid polypeptide reads, in one-letter code: GMP synthase [glutamine-hydrolyzing] (521 aa).

In terms of domain architecture, Glutamine amidotransferase type-1 spans 8 to 203 (KILILDFGAQ…VVDVCGCQTL (196 aa)). The active-site Nucleophile is cysteine 85. Residues histidine 177 and glutamate 179 contribute to the active site. The GMPS ATP-PPase domain occupies 204 to 396 (WTAANIIDDQ…LGLPRTMVYR (193 aa)). ATP is bound at residue 231-237 (SGGVDSS).

Homodimer.

The enzyme catalyses XMP + L-glutamine + ATP + H2O = GMP + L-glutamate + AMP + diphosphate + 2 H(+). Its pathway is purine metabolism; GMP biosynthesis; GMP from XMP (L-Gln route): step 1/1. In terms of biological role, catalyzes the synthesis of GMP from XMP. This chain is GMP synthase [glutamine-hydrolyzing], found in Xanthomonas campestris pv. campestris (strain B100).